Reading from the N-terminus, the 240-residue chain is Uridylate kinase (240 aa).

12–15 serves as a coordination point for ATP; it reads KLSG. Residues 20–25 form an involved in allosteric activation by GTP region; the sequence is GEDGFG. Glycine 54 is a binding site for UMP. ATP is bound by residues glycine 55 and arginine 59. UMP contacts are provided by residues aspartate 74 and 135 to 142; that span reads TGNPYFST. Positions 163, 169, and 172 each coordinate ATP.

Belongs to the UMP kinase family. As to quaternary structure, homohexamer.

It is found in the cytoplasm. The enzyme catalyses UMP + ATP = UDP + ADP. The protein operates within pyrimidine metabolism; CTP biosynthesis via de novo pathway; UDP from UMP (UMPK route): step 1/1. Allosterically activated by GTP. Probably inhibited by UTP. Its function is as follows. Catalyzes the reversible phosphorylation of UMP to UDP. The chain is Uridylate kinase (pyrH) from Enterococcus faecalis (strain ATCC 700802 / V583).